The sequence spans 163 residues: Succinate dehydrogenase assembly factor 2-B, mitochondrial (163 aa).

The N-terminal 23 residues, 1 to 23, are a transit peptide targeting the mitochondrion; sequence MFRQLRLTMDISGWIFMPWRRSL.

This sequence belongs to the SDHAF2 family. Interacts with the flavoprotein subunit within the SDH catalytic dimer.

It localises to the mitochondrion matrix. Its function is as follows. Plays an essential role in the assembly of succinate dehydrogenase (SDH), an enzyme complex (also referred to as respiratory complex II) that is a component of both the tricarboxylic acid (TCA) cycle and the mitochondrial electron transport chain, and which couples the oxidation of succinate to fumarate with the reduction of ubiquinone (coenzyme Q) to ubiquinol. Required for flavinylation (covalent attachment of FAD) of the flavoprotein subunit of the SDH catalytic dimer. This is Succinate dehydrogenase assembly factor 2-B, mitochondrial from Drosophila ananassae (Fruit fly).